Consider the following 435-residue polypeptide: GTPase Der (435 aa).

EngA-type G domains are found at residues 3–168 (PTVA…PEDD) and 176–351 (VKLT…QNRR). GTP is bound by residues 9 to 16 (GRPNVGKS), 56 to 60 (DTGGY), 120 to 123 (NKVD), 182 to 189 (GRPNVGKS), 229 to 233 (DTAGL), and 294 to 297 (NKWD). In terms of domain architecture, KH-like spans 352 to 435 (MKIDTSRLNN…TPIELKFRRK (84 aa)).

It belongs to the TRAFAC class TrmE-Era-EngA-EngB-Septin-like GTPase superfamily. EngA (Der) GTPase family. Associates with the 50S ribosomal subunit.

In terms of biological role, GTPase that plays an essential role in the late steps of ribosome biogenesis. This is GTPase Der from Chloroherpeton thalassium (strain ATCC 35110 / GB-78).